The sequence spans 250 residues: Manganese transport system ATP-binding protein MntB (250 aa).

Positions 4–236 (VELDNVTVAY…NLQKTYGGRL (233 aa)) constitute an ABC transporter domain. 36 to 43 (GPNGAGKS) provides a ligand contact to ATP.

The protein belongs to the ABC transporter superfamily. The complex is probably composed of two ATP-binding proteins (MntB), two transmembrane proteins (MntC and MntD) and a solute-binding protein (MntA).

The protein localises to the cell membrane. Functionally, probably part of the ABC transporter complex MntABCD involved in manganese import. Probably responsible for energy coupling to the transport system. The protein is Manganese transport system ATP-binding protein MntB of Bacillus subtilis (strain 168).